The chain runs to 210 residues: tRNA (guanine-N(7)-)-methyltransferase (210 aa).

Residues glutamate 36, glutamate 61, aspartate 90, and aspartate 112 each contribute to the S-adenosyl-L-methionine site. Aspartate 112 is a catalytic residue. Residues lysine 116, aspartate 148, and 188–191 each bind substrate; that span reads TEYE.

The protein belongs to the class I-like SAM-binding methyltransferase superfamily. TrmB family.

The enzyme catalyses guanosine(46) in tRNA + S-adenosyl-L-methionine = N(7)-methylguanosine(46) in tRNA + S-adenosyl-L-homocysteine. Its pathway is tRNA modification; N(7)-methylguanine-tRNA biosynthesis. In terms of biological role, catalyzes the formation of N(7)-methylguanine at position 46 (m7G46) in tRNA. The polypeptide is tRNA (guanine-N(7)-)-methyltransferase (Mycoplasma genitalium (strain ATCC 33530 / DSM 19775 / NCTC 10195 / G37) (Mycoplasmoides genitalium)).